Reading from the N-terminus, the 353-residue chain is Mas-related G-protein coupled receptor member B5 (353 aa).

Residues 1–67 (MPDSPTESYG…SCIITFNTLN (67 aa)) lie on the Extracellular side of the membrane. Asn26 and Asn44 each carry an N-linked (GlcNAc...) asparagine glycan. Residues 68 to 90 (FLTATISVVGTAGNATVLRLLGF) traverse the membrane as a helical segment. The Cytoplasmic portion of the chain corresponds to 91 to 96 (HMHRYA). The helical transmembrane segment at 97–117 (FSVYVFNLAGADFLYLCTQTV) threads the bilayer. Over 118-131 (YSLECVLQFDNSYF) the chain is Extracellular. A helical transmembrane segment spans residues 132 to 152 (YFLLTILMFAYLAALCMIPAI). The Cytoplasmic segment spans residues 153 to 180 (STERCLSVTWPIWYHCQRPRHTSATVCA). The chain crosses the membrane as a helical span at residues 181 to 201 (LFWAFSLLLRLLLGQGCGFLF). The Extracellular portion of the chain corresponds to 202–213 (GKYDYYFCRYCS). Residues 214-234 (FITTAFLIVLFVVPFVSSLAM) form a helical membrane-spanning segment. Residues 235–253 (LTKIICGSHRIPVTRFYVT) lie on the Cytoplasmic side of the membrane. The helical transmembrane segment at 254–274 (IAVTVLVFTFFGLPVGIISLL) threads the bilayer. Topologically, residues 275-289 (LPRIVVFRGVFYIYK) are extracellular. The chain crosses the membrane as a helical span at residues 290–310 (IVTFLYSVNCCANPIIYFLIG). The Cytoplasmic segment spans residues 311 to 353 (SIRHHRLQRQSLKLLLQRAMQDTPEEEGGVKGPSQKSNELEIV). Residues 333–353 (TPEEEGGVKGPSQKSNELEIV) form a disordered region.

It belongs to the G-protein coupled receptor 1 family. Mas subfamily. Expressed strongly in newborn dorsal root ganglia, adult dorsal root ganglia and trigeminal ganlia.

The protein resides in the membrane. In terms of biological role, orphan receptor. Probably involved in the function of nociceptive neurons. May regulate nociceptor function and/or development, including the sensation or modulation of pain. This Rattus norvegicus (Rat) protein is Mas-related G-protein coupled receptor member B5 (Mrgprb5).